The primary structure comprises 442 residues: MDSTVFINNPSLTLPFSYTFTSSSNSSTTTSTTTDSSSGQWMDGRIWSKLPPPLLDRVIAFLPPPAFFRTRCVCKRFYSLLFSNTFLETYLQLLPLRHNCFLFFKHKTLKSYIYKRGGTNDDDSNKAEGFLFDPNEIRWYRLSFAYIPSGFYPSGSSGGLVSWVSEEAGLKTILLCNPLVGSVSQLPPISRPRLFPSIGLSVTPTSIDVTVAGDDLISPYAVKNLSSESFHVDAGGFFSLWAMTSSLPRLCSLESGKMVYVQGKFYCMNYSPFSVLSYEVTGNRWIKIQAPMRRFLRSPSLLESKGRLILVAAVEKSKLNVPKSLRLWSLQQDNATWVEIERMPQPLYTQFAAEEGGKGFECVGNQEFVMIVLRGTSLQLLFDIVRKSWLWVPPCPYSGSGGGSSGGGSDGEVLQGFAYDPVLTTPVVSLLDQLTLPFPGVC.

Positions Met1 to Thr85 are interaction with SKP1A. Residues Gly44–Tyr90 form the F-box domain.

Part of a putative SCF (ASK/Cullin/F-box) ubiquitin ligase complex. Interacts with SKP1A/ASK1, SKP1B/ASK2 and ASK11.

The protein localises to the nucleus. Its pathway is protein modification; protein ubiquitination. In terms of biological role, component of SCF(ASK-cullin-F-box) E3 ubiquitin ligase complexes, which may mediate the ubiquitination and subsequent proteasomal degradation of target proteins. Considered as a meristem identity factor required for normal growth of the young floral meristem. Acts together with LEAFY to positively regulate the B class floral homeotic genes APETALA3 and PISTILLATA. In this way, operates as a region-specific regulator for petal and stamen development. Alternatively, may play a role as a negative regulator of the C class floral homeotic genes. Interacts together with the SKP1-like protein ASK1 to form a ubiquitin E3 ligase complex and could indirectly promote the ubiquitination and degradation of specific proteins controlling the floral primordia development like repressors of B class floral homeotic genes. This Arabidopsis thaliana (Mouse-ear cress) protein is Protein UNUSUAL FLORAL ORGANS (UFO).